Reading from the N-terminus, the 133-residue chain is Large ribosomal subunit protein uL11 (133 aa).

The protein belongs to the universal ribosomal protein uL11 family. As to quaternary structure, part of the ribosomal stalk of the 50S ribosomal subunit. Interacts with L10 and the large rRNA to form the base of the stalk. L10 forms an elongated spine to which 2 L12 dimers bind in a sequential fashion forming a pentameric L10(L12)2(L12)2 complex. One or more lysine residues are methylated.

Its function is as follows. Forms part of the ribosomal stalk which helps the ribosome interact with GTP-bound translation factors. The sequence is that of Large ribosomal subunit protein uL11 from Geobacillus stearothermophilus (Bacillus stearothermophilus).